Here is a 571-residue protein sequence, read N- to C-terminus: UvrABC system protein C (571 aa).

The region spanning 15–93 (TSPGVYLWKD…IDRYNPEFNI (79 aa)) is the GIY-YIG domain. A UVR domain is found at 184–219 (NNYINELTNKMHQAANNMQFELALFLRDGLTYLKKL).

Belongs to the UvrC family. As to quaternary structure, interacts with UvrB in an incision complex.

The protein resides in the cytoplasm. In terms of biological role, the UvrABC repair system catalyzes the recognition and processing of DNA lesions. UvrC both incises the 5' and 3' sides of the lesion. The N-terminal half is responsible for the 3' incision and the C-terminal half is responsible for the 5' incision. This chain is UvrABC system protein C, found in Mycoplasmopsis bovis (strain ATCC 25523 / DSM 22781 / NCTC 10131 / PG45) (Mycoplasma bovis).